The chain runs to 569 residues: Glutamate--tRNA ligase (569 aa).

A 'HIGH' region motif is present at residues 108 to 118 (PNPDFVLHLGS).

Belongs to the class-I aminoacyl-tRNA synthetase family. Glutamate--tRNA ligase type 2 subfamily.

It localises to the cytoplasm. The enzyme catalyses tRNA(Glu) + L-glutamate + ATP = L-glutamyl-tRNA(Glu) + AMP + diphosphate. Its function is as follows. Catalyzes the attachment of glutamate to tRNA(Glu) in a two-step reaction: glutamate is first activated by ATP to form Glu-AMP and then transferred to the acceptor end of tRNA(Glu). In Thermofilum pendens (strain DSM 2475 / Hrk 5), this protein is Glutamate--tRNA ligase.